We begin with the raw amino-acid sequence, 516 residues long: 3-ketoacyl-CoA synthase 4 (516 aa).

Transmembrane regions (helical) follow at residues 48–68 (LISNLLTLCLFPLAVVISVEA) and 87–107 (LVSIIICSAILVFGLTVYVMT). Residues 104–393 (YVMTRPRPVY…FFMTLVVKKL (290 aa)) form the FAE domain. Residues Cys-248, His-327, His-411, His-415, His-444, and Asn-448 contribute to the active site.

This sequence belongs to the thiolase-like superfamily. Chalcone/stilbene synthases family. As to expression, expressed at low levels in siliques, flowers, leaves and stems.

It is found in the membrane. The enzyme catalyses a very-long-chain acyl-CoA + malonyl-CoA + H(+) = a very-long-chain 3-oxoacyl-CoA + CO2 + CoA. Its pathway is lipid metabolism; fatty acid biosynthesis. This chain is 3-ketoacyl-CoA synthase 4, found in Arabidopsis thaliana (Mouse-ear cress).